The chain runs to 145 residues: D-aminoacyl-tRNA deacylase (145 aa).

Positions 137–138 (GP) match the Gly-cisPro motif, important for rejection of L-amino acids motif.

It belongs to the DTD family. In terms of assembly, homodimer.

It is found in the cytoplasm. The catalysed reaction is glycyl-tRNA(Ala) + H2O = tRNA(Ala) + glycine + H(+). It catalyses the reaction a D-aminoacyl-tRNA + H2O = a tRNA + a D-alpha-amino acid + H(+). Functionally, an aminoacyl-tRNA editing enzyme that deacylates mischarged D-aminoacyl-tRNAs. Also deacylates mischarged glycyl-tRNA(Ala), protecting cells against glycine mischarging by AlaRS. Acts via tRNA-based rather than protein-based catalysis; rejects L-amino acids rather than detecting D-amino acids in the active site. By recycling D-aminoacyl-tRNA to D-amino acids and free tRNA molecules, this enzyme counteracts the toxicity associated with the formation of D-aminoacyl-tRNA entities in vivo and helps enforce protein L-homochirality. The protein is D-aminoacyl-tRNA deacylase of Chromohalobacter salexigens (strain ATCC BAA-138 / DSM 3043 / CIP 106854 / NCIMB 13768 / 1H11).